Here is a 48-residue protein sequence, read N- to C-terminus: MTKRKANHVINGMNAAKSQGNGAGYIEDDQLVLTAEQRQNNKKRKKNQ.

The interval 1 to 23 is disordered; the sequence is MTKRKANHVINGMNAAKSQGNGA.

It belongs to the SspO family.

The protein localises to the spore core. This is Small, acid-soluble spore protein O from Bacillus pumilus (strain SAFR-032).